Consider the following 393-residue polypeptide: Probable chromate transport protein (393 aa).

Helical transmembrane passes span 22-42 (YFLK…GYMH), 90-110 (ALVG…LGWA), 119-139 (WMQA…AISA), 146-166 (TVGT…TTIV), 201-221 (FIGL…TSLL), 231-251 (AGAF…GGVV), 261-281 (QFLD…ITTG), 282-302 (FIGF…AMFI), 327-347 (FVNG…VVLG), and 370-390 (LGKK…GVIF).

Belongs to the chromate ion transporter (CHR) (TC 2.A.51) family.

The protein localises to the cell membrane. In terms of biological role, may function in the active transport of chromate into the cell under sulfur-deficient conditions. This is Probable chromate transport protein (srpC) from Synechococcus elongatus (strain ATCC 33912 / PCC 7942 / FACHB-805) (Anacystis nidulans R2).